The primary structure comprises 133 residues: Large ribosomal subunit protein uL15 (133 aa).

The interval 1–64 (MGLENLKPAK…QPLQRRLPKI (64 aa)) is disordered.

It belongs to the universal ribosomal protein uL15 family. Part of the 50S ribosomal subunit.

Its function is as follows. Binds to the 23S rRNA. This is Large ribosomal subunit protein uL15 from Helicobacter pylori (strain J99 / ATCC 700824) (Campylobacter pylori J99).